Here is a 173-residue protein sequence, read N- to C-terminus: Adenine phosphoribosyltransferase (173 aa).

Belongs to the purine/pyrimidine phosphoribosyltransferase family. Homodimer.

Its subcellular location is the cytoplasm. The catalysed reaction is AMP + diphosphate = 5-phospho-alpha-D-ribose 1-diphosphate + adenine. It participates in purine metabolism; AMP biosynthesis via salvage pathway; AMP from adenine: step 1/1. Functionally, catalyzes a salvage reaction resulting in the formation of AMP, that is energically less costly than de novo synthesis. The sequence is that of Adenine phosphoribosyltransferase from Desulfosudis oleivorans (strain DSM 6200 / JCM 39069 / Hxd3) (Desulfococcus oleovorans).